A 116-amino-acid chain; its full sequence is U30-theraphotoxin-Cg1b (116 aa).

The first 17 residues, 1 to 17 (MKLCVLTIATLLVTATS), serve as a signal peptide directing secretion. Residues 18 to 53 (LETQKEIAEGNELTREETPSLVEHKEDEAAAASEKR) constitute a propeptide that is removed on maturation. The disordered stretch occupies residues 25–45 (AEGNELTREETPSLVEHKEDE). Intrachain disulfides connect Cys-55/Cys-69, Cys-62/Cys-75, Cys-66/Cys-112, and Cys-68/Cys-88.

It belongs to the neurotoxin 03 (Tx2) family. 02 subfamily. Expressed by the venom gland.

Its subcellular location is the secreted. Functionally, probable ion channel inhibitor. This Chilobrachys guangxiensis (Chinese earth tiger tarantula) protein is U30-theraphotoxin-Cg1b.